The following is a 566-amino-acid chain: Zinc finger protein 704 (566 aa).

Disordered regions lie at residues 1 to 148 (MQAR…ARGA), 166 to 203 (DFRR…LDQE), and 253 to 324 (PLVR…DEAD). Residues 12-31 (LGSRRGGAAPAPAPEAAALG) are compositionally biased toward low complexity. A compositionally biased stretch (pro residues) spans 32–55 (LPPPGPSPAAAPGSWRPPLPPPRG). A compositionally biased stretch (low complexity) spans 56–72 (TGPSRAAAASSPVLLLL). Over residues 91-100 (RVTEKPRGVA) the composition is skewed to basic and acidic residues. Residues 101–128 (EEEDDDEEEDEEVVVEVVDGDEDDEDAE) show a composition bias toward acidic residues. A compositionally biased stretch (basic and acidic residues) spans 186–203 (EDVRTADTKKTSRVLDQE). The span at 267-290 (SGSWKEGAPSSSSSSGYWSWSAPS) shows a compositional bias: low complexity. The segment at 346-371 (FKCLWKSCGKVLNTAAGIQKHIRAVH) adopts a C2H2-type zinc-finger fold. Phosphoserine occurs at positions 378 and 381. Disordered stretches follow at residues 409 to 436 (VSPS…CAKT) and 497 to 535 (PVSP…PRGE). The interval 471–566 (GSAKFTPNGS…WKKACQRFID (96 aa)) is sufficient for binding to RE2 sequence motifs. A CR1 motif is present at residues 537-541 (KKCRK). The CR2 motif lies at 555-559 (CRWKK).

The protein localises to the nucleus. Its function is as follows. Transcription factor which binds to RE2 sequence elements in the MYOD1 enhancer. The polypeptide is Zinc finger protein 704 (Mus musculus (Mouse)).